The chain runs to 326 residues: Sulfate/thiosulfate import ATP-binding protein CysA (326 aa).

Residues 3 to 237 (IEVRNVSKNF…PSNDFVYHFL (235 aa)) form the ABC transporter domain. Residue 35–42 (GPSGCGKT) participates in ATP binding.

Belongs to the ABC transporter superfamily. Sulfate/tungstate importer (TC 3.A.1.6) family. As to quaternary structure, the complex is composed of two ATP-binding proteins (CysA), two transmembrane proteins (CysT and CysW) and a solute-binding protein (CysP).

It localises to the cell inner membrane. The enzyme catalyses sulfate(out) + ATP + H2O = sulfate(in) + ADP + phosphate + H(+). It carries out the reaction thiosulfate(out) + ATP + H2O = thiosulfate(in) + ADP + phosphate + H(+). Its function is as follows. Part of the ABC transporter complex CysAWTP involved in sulfate/thiosulfate import. Responsible for energy coupling to the transport system. The sequence is that of Sulfate/thiosulfate import ATP-binding protein CysA from Pseudomonas syringae pv. tomato (strain ATCC BAA-871 / DC3000).